Here is a 660-residue protein sequence, read N- to C-terminus: Methionine--tRNA ligase 1 (660 aa).

The 'HIGH' region motif lies at 15-25 (YYPSGKLHIGH). The 'KMSKS' region motif lies at 310–314 (KMSKS). Residue K313 coordinates ATP. A tRNA-binding domain is found at 560 to 660 (DFFKVELRVA…QNLPNGTKIK (101 aa)).

This sequence belongs to the class-I aminoacyl-tRNA synthetase family. MetG type 2B subfamily. As to quaternary structure, homodimer.

Its subcellular location is the cytoplasm. It catalyses the reaction tRNA(Met) + L-methionine + ATP = L-methionyl-tRNA(Met) + AMP + diphosphate. Functionally, is required not only for elongation of protein synthesis but also for the initiation of all mRNA translation through initiator tRNA(fMet) aminoacylation. This is Methionine--tRNA ligase 1 from Bacillus cereus (strain ATCC 14579 / DSM 31 / CCUG 7414 / JCM 2152 / NBRC 15305 / NCIMB 9373 / NCTC 2599 / NRRL B-3711).